A 487-amino-acid chain; its full sequence is CUGBP Elav-like family member 1 (487 aa).

Met-1 is modified (N-acetylmethionine). At Thr-4 the chain carries Phosphothreonine. RRM domains lie at 16 to 99 and 108 to 188; these read IKMF…PADS and RKLF…FADT. Lys-109 is covalently cross-linked (Glycyl lysine isopeptide (Lys-Gly) (interchain with G-Cter in SUMO2)). Phosphoserine occurs at positions 179 and 303. Residues 277 to 310 form a disordered region; the sequence is TPSGTNALTTSSSPLSVLTSSAGSSPSSSSSNSV. Positions 283–310 are enriched in low complexity; sequence ALTTSSSPLSVLTSSAGSSPSSSSSNSV. The RRM 3 domain occupies 402-480; the sequence is ANLFIYHLPQ…KRLKVQLKRS (79 aa).

It belongs to the CELF/BRUNOL family. Interacts with HNRNPH1; the interaction in RNA-dependent. Interacts with PARN. Component of an EIF2 complex at least composed of CELF1/CUGBP1, CALR, CALR3, EIF2S1, EIF2S2, HSP90B1 and HSPA5. Associates with polysomes.

The protein resides in the nucleus. It localises to the cytoplasm. Functionally, RNA-binding protein implicated in the regulation of several post-transcriptional events. Involved in pre-mRNA alternative splicing, mRNA translation and stability. Mediates exon inclusion and/or exclusion in pre-mRNA that are subject to tissue-specific and developmentally regulated alternative splicing. Specifically activates exon 5 inclusion of cardiac isoforms of TNNT2 during heart remodeling at the juvenile to adult transition. Acts both as an activator and as a repressor of a pair of coregulated exons: promotes inclusion of the smooth muscle (SM) exon but exclusion of the non-muscle (NM) exon in actinin pre-mRNAs. Activates SM exon 5 inclusion by antagonizing the repressive effect of PTB. Promotes exclusion of exon 11 of the INSR pre-mRNA. Inhibits, together with HNRNPH1, insulin receptor (IR) pre-mRNA exon 11 inclusion in myoblast. Increases translation and controls the choice of translation initiation codon of CEBPB mRNA. Increases mRNA translation of CEBPB in aging liver. Increases translation of CDKN1A mRNA by antagonizing the repressive effect of CALR3. Mediates rapid cytoplasmic mRNA deadenylation. Recruits the deadenylase PARN to the poly(A) tail of EDEN-containing mRNAs to promote their deadenylation. Required for completion of spermatogenesis. Binds to (CUG)n triplet repeats in the 3'-UTR of transcripts such as DMPK and to Bruno response elements (BREs). Binds to muscle-specific splicing enhancer (MSE) intronic sites flanking the alternative exon 5 of TNNT2 pre-mRNA. Binds to AU-rich sequences (AREs or EDEN-like) localized in the 3'-UTR of JUN and FOS mRNAs. Binds to the IR RNA. Binds to the 5'-region of CDKN1A and CEBPB mRNAs. Binds with the 5'-region of CEBPB mRNA in aging liver. May be a specific regulator of miRNA biogenesis. Binds to primary microRNA pri-MIR140 and, with CELF2, negatively regulates the processing to mature miRNA. In Rattus norvegicus (Rat), this protein is CUGBP Elav-like family member 1 (Celf1).